Consider the following 452-residue polypeptide: Probable phosphoglucosamine mutase (452 aa).

S96 (phosphoserine intermediate) is an active-site residue. Positions 96, 235, 237, and 239 each coordinate Mg(2+). S96 carries the phosphoserine modification.

The protein belongs to the phosphohexose mutase family. Requires Mg(2+) as cofactor. In terms of processing, activated by phosphorylation.

It carries out the reaction alpha-D-glucosamine 1-phosphate = D-glucosamine 6-phosphate. Functionally, catalyzes the conversion of glucosamine-6-phosphate to glucosamine-1-phosphate. This chain is Probable phosphoglucosamine mutase, found in Methanopyrus kandleri (strain AV19 / DSM 6324 / JCM 9639 / NBRC 100938).